Here is a 196-residue protein sequence, read N- to C-terminus: Thymidylate kinase (196 aa).

G7–T14 is a binding site for ATP.

This sequence belongs to the thymidylate kinase family.

The enzyme catalyses dTMP + ATP = dTDP + ADP. Its function is as follows. Phosphorylation of dTMP to form dTDP in both de novo and salvage pathways of dTTP synthesis. The protein is Thymidylate kinase of Wolbachia pipientis wMel.